The following is a 264-amino-acid chain: Thymidylate synthase (264 aa).

DUMP is bound at residue Arg-21. His-51 contacts (6R)-5,10-methylene-5,6,7,8-tetrahydrofolate. Residue 126–127 (RR) coordinates dUMP. Residue Cys-146 is the Nucleophile of the active site. DUMP-binding positions include 166-169 (RSCD), Asn-177, and 207-209 (HLY). Asp-169 is a (6R)-5,10-methylene-5,6,7,8-tetrahydrofolate binding site. Ala-263 provides a ligand contact to (6R)-5,10-methylene-5,6,7,8-tetrahydrofolate.

It belongs to the thymidylate synthase family. Bacterial-type ThyA subfamily. In terms of assembly, homodimer.

It localises to the cytoplasm. It carries out the reaction dUMP + (6R)-5,10-methylene-5,6,7,8-tetrahydrofolate = 7,8-dihydrofolate + dTMP. It functions in the pathway pyrimidine metabolism; dTTP biosynthesis. In terms of biological role, catalyzes the reductive methylation of 2'-deoxyuridine-5'-monophosphate (dUMP) to 2'-deoxythymidine-5'-monophosphate (dTMP) while utilizing 5,10-methylenetetrahydrofolate (mTHF) as the methyl donor and reductant in the reaction, yielding dihydrofolate (DHF) as a by-product. This enzymatic reaction provides an intracellular de novo source of dTMP, an essential precursor for DNA biosynthesis. The chain is Thymidylate synthase from Shewanella baltica (strain OS155 / ATCC BAA-1091).